The sequence spans 376 residues: 26S proteasome non-ATPase regulatory subunit 4 (376 aa).

In terms of domain architecture, VWFA spans 5–188 (STMVCVDNSE…LADALISSPI (184 aa)). Residue Lys122 forms a Glycyl lysine isopeptide (Lys-Gly) (interchain with G-Cter in SUMO2) linkage. Positions 197-262 (LGLGASDFEF…TEDSDDALLK (66 aa)) are interaction with UBQLN1. The UIM 1 domain maps to 211–230 (SADPELALALRVSMEEQRQR). Basic and acidic residues predominate over residues 224–237 (MEEQRQRQEEEARR). The interval 224 to 257 (MEEQRQRQEEEARRAAAASAAEAGIATPGTEDSD) is disordered. Phosphothreonine occurs at positions 250 and 253. 2 positions are modified to phosphoserine: Ser256 and Ala259. The UIM 2 domain occupies 282-301 (TEEEQIAYAMQMSLQGTEFS). The interval 355–376 (MGALASQATKDGKNDKKEEEKK) is disordered. A Phosphoserine modification is found at Ser360. Residues 364-376 (KDGKNDKKEEEKK) are compositionally biased toward basic and acidic residues.

This sequence belongs to the proteasome subunit S5A family. In terms of assembly, component of the 19S proteasome regulatory particle complex. The 26S proteasome consists of a 20S core particle (CP) and two 19S regulatory subunits (RP). The regulatory particle is made of a lid composed of 9 subunits, a base containing 6 ATPases and few additional components including PSMD4. Interacts with NUB1. Interacts with SQSTM1. Interacts with UBQLN4. Interacts with UBE3A. Interacts with UBQLN1 (via ubiquitin-like domain). Interacts with DDI2. As to expression, isoform Rpn10A is ubiquitous whereas isoform Rpn10E is mostly expressed in the embryonic brain.

Its function is as follows. Component of the 26S proteasome, a multiprotein complex involved in the ATP-dependent degradation of ubiquitinated proteins. This complex plays a key role in the maintenance of protein homeostasis by removing misfolded or damaged proteins, which could impair cellular functions, and by removing proteins whose functions are no longer required. Therefore, the proteasome participates in numerous cellular processes, including cell cycle progression, apoptosis, or DNA damage repair. PSMD4 acts as an ubiquitin receptor subunit through ubiquitin-interacting motifs and selects ubiquitin-conjugates for destruction. Displays a preferred selectivity for longer polyubiquitin chains. The polypeptide is 26S proteasome non-ATPase regulatory subunit 4 (Psmd4) (Mus musculus (Mouse)).